Here is a 105-residue protein sequence, read N- to C-terminus: Large ribosomal subunit protein uL24 (105 aa).

Residues 67 to 105 (HISNLNPVDPKTGKATRIGRRKSSEGTLVRYSKKSGEEI) form a disordered region.

The protein belongs to the universal ribosomal protein uL24 family. Part of the 50S ribosomal subunit.

Its function is as follows. One of two assembly initiator proteins, it binds directly to the 5'-end of the 23S rRNA, where it nucleates assembly of the 50S subunit. Functionally, one of the proteins that surrounds the polypeptide exit tunnel on the outside of the subunit. The polypeptide is Large ribosomal subunit protein uL24 (Bacteroides thetaiotaomicron (strain ATCC 29148 / DSM 2079 / JCM 5827 / CCUG 10774 / NCTC 10582 / VPI-5482 / E50)).